A 484-amino-acid chain; its full sequence is Replication-associated protein (484 aa).

Positions 146-153 (IRKYHQSV) match the Nuclear localization signal motif.

It localises to the host nucleus. Its function is as follows. Plays an essential for the replication of viral DNA. Presumably cleaves viral genomic dsRNA replicative form to initiate rolling circle replication. The protein is Replication-associated protein of Chaetoceros (Chaetoceros sp. DNA virus 7).